A 295-amino-acid polypeptide reads, in one-letter code: Acetylglutamate kinase (295 aa).

Substrate-binding positions include 66–67 (GG), arginine 88, and asparagine 193.

The protein belongs to the acetylglutamate kinase family. ArgB subfamily.

The protein resides in the cytoplasm. The catalysed reaction is N-acetyl-L-glutamate + ATP = N-acetyl-L-glutamyl 5-phosphate + ADP. The protein operates within amino-acid biosynthesis; L-arginine biosynthesis; N(2)-acetyl-L-ornithine from L-glutamate: step 2/4. Catalyzes the ATP-dependent phosphorylation of N-acetyl-L-glutamate. This chain is Acetylglutamate kinase, found in Allorhizobium ampelinum (strain ATCC BAA-846 / DSM 112012 / S4) (Agrobacterium vitis (strain S4)).